The following is a 523-amino-acid chain: Calcium-dependent protein kinase 28 (523 aa).

Residue Gly-2 is the site of N-myristoyl glycine attachment. Residue Cys-4 is the site of S-palmitoyl cysteine attachment. Residues 15 to 43 (SSRRSSQTKSKAAPTPIDTKASTKRRTGS) form a disordered region. Positions 62 to 322 (YTIGKLLGHG…AAQALSHAWV (261 aa)) constitute a Protein kinase domain. ATP-binding positions include 68–76 (LGHGQFGYT) and Lys-91. Residue Asp-188 is the Proton acceptor of the active site. Residues Ser-228 and Ser-318 each carry the phosphoserine modification. Residues 328-358 (ATDIPVDISVLNNLRQFVRYSRLKQFALRAL) are autoinhibitory domain. 4 EF-hand domains span residues 365-400 (AEIS…DLPW), 402-437 (LKDS…VHQL), 444-479 (KWQL…RGSI), and 482-509 (LLDE…ASIS). Ca(2+)-binding residues include Asp-378, Asp-380, Asn-382, Glu-389, Asp-415, Asn-417, Asp-419, Glu-426, Asp-457, Asp-459, Asp-461, Tyr-463, Glu-468, Asp-487, Asp-489, Asp-491, and Lys-493. Phosphoserine is present on Ser-495. Glu-498 lines the Ca(2+) pocket. Residue Ser-515 is modified to Phosphoserine.

Belongs to the protein kinase superfamily. Ser/Thr protein kinase family. CDPK subfamily. As to quaternary structure, interacts with BIK1. As to expression, expressed in vascular and meristematic tissues throughout plant development.

It is found in the cell membrane. The catalysed reaction is L-seryl-[protein] + ATP = O-phospho-L-seryl-[protein] + ADP + H(+). It carries out the reaction L-threonyl-[protein] + ATP = O-phospho-L-threonyl-[protein] + ADP + H(+). Its activity is regulated as follows. Activated by calcium. Autophosphorylation plays an important role in the regulation of the kinase activity. Functionally, may play a role in signal transduction pathways that involve calcium as a second messenger. Acts as a developmentally controlled regulator for coordinated stem elongation and vascular development. Acts as a key component which contributes to the developmental switch that establishes the transition from vegetative to reproductive growth. Involved in pathogen-associated molecular pattern (PAMP)-triggered immunity (PTI) signaling. Interacts with and phosphorylates the kinase BIK1, a central rate-limiting kinase in PTI signaling. Facilitates BIK1 turnover and negatively regulates BIK1-mediated immune responses triggered by several PAMPs. Its kinase activity is necessary and sufficient for its function in PTI signaling. This is Calcium-dependent protein kinase 28 from Arabidopsis thaliana (Mouse-ear cress).